Consider the following 161-residue polypeptide: Allophycocyanin alpha chain (161 aa).

At Asn-71 the chain carries N4-methylasparagine. A (2R,3E)-phycocyanobilin-binding site is contributed by Cys-81.

This sequence belongs to the phycobiliprotein family. In terms of assembly, heterodimer of an alpha and a beta chain. Contains one covalently linked phycocyanobilin chromophore.

Its subcellular location is the cellular thylakoid membrane. Its function is as follows. Light-harvesting photosynthetic bile pigment-protein from the phycobiliprotein complex. Allophycocyanin has a maximum absorption at approximately 650 nanometers. The polypeptide is Allophycocyanin alpha chain (apcA) (Thermosynechococcus vestitus (strain NIES-2133 / IAM M-273 / BP-1)).